Reading from the N-terminus, the 123-residue chain is Protein Wnt-7 (123 aa).

A lipid anchor (O-palmitoleoyl serine; by PORCN) is attached at serine 1. N-linked (GlcNAc...) asparagine glycosylation is found at asparagine 79 and asparagine 90. Cysteines 89 and 104 form a disulfide.

Belongs to the Wnt family. In terms of processing, palmitoleoylation is required for efficient binding to frizzled receptors. Depalmitoleoylation leads to Wnt signaling pathway inhibition.

The protein resides in the secreted. It localises to the extracellular space. Its subcellular location is the extracellular matrix. Its function is as follows. Ligand for members of the frizzled family of seven transmembrane receptors. Probable developmental protein. May be a signaling molecule which affects the development of discrete regions of tissues. Is likely to signal over only few cell diameters. In Strongylocentrotus purpuratus (Purple sea urchin), this protein is Protein Wnt-7 (WNT-7).